A 99-amino-acid polypeptide reads, in one-letter code: Signal recognition particle 19 kDa protein (99 aa).

This sequence belongs to the SRP19 family. As to quaternary structure, part of the signal recognition particle protein translocation system, which is composed of SRP and FtsY. Archaeal SRP consists of a 7S RNA molecule of 300 nucleotides and two protein subunits: SRP54 and SRP19.

It is found in the cytoplasm. Its function is as follows. Involved in targeting and insertion of nascent membrane proteins into the cytoplasmic membrane. Binds directly to 7S RNA and mediates binding of the 54 kDa subunit of the SRP. The polypeptide is Signal recognition particle 19 kDa protein (Pyrococcus abyssi (strain GE5 / Orsay)).